The following is a 178-amino-acid chain: Oligoribonuclease (178 aa).

The 162-residue stretch at 7–168 (LIWIDLEMTG…DDIRESIAEL (162 aa)) folds into the Exonuclease domain. Tyr-128 is a catalytic residue.

The protein belongs to the oligoribonuclease family.

The protein localises to the cytoplasm. Functionally, 3'-to-5' exoribonuclease specific for small oligoribonucleotides. This chain is Oligoribonuclease, found in Francisella tularensis subsp. holarctica (strain OSU18).